Here is a 425-residue protein sequence, read N- to C-terminus: Histidine--tRNA ligase (425 aa).

It belongs to the class-II aminoacyl-tRNA synthetase family. Homodimer.

It is found in the cytoplasm. It carries out the reaction tRNA(His) + L-histidine + ATP = L-histidyl-tRNA(His) + AMP + diphosphate + H(+). The protein is Histidine--tRNA ligase of Listeria innocua serovar 6a (strain ATCC BAA-680 / CLIP 11262).